Here is a 251-residue protein sequence, read N- to C-terminus: Thiamine thiazole synthase (251 aa).

Residues Ser34, 53–54 (EK), Gly61, Val125, and 151–153 (HVD) contribute to the NAD(+) site. Fe cation-binding residues include Asp153 and His168. Met216 provides a ligand contact to NAD(+). Position 226 (Arg226) interacts with glycine.

It belongs to the THI4 family. As to quaternary structure, homooctamer; tetramer of dimers. It depends on Fe(2+) as a cofactor.

It carries out the reaction hydrogen sulfide + glycine + NAD(+) = ADP-5-ethyl-4-methylthiazole-2-carboxylate + nicotinamide + 3 H2O + H(+). It participates in cofactor biosynthesis; thiamine diphosphate biosynthesis. Involved in the biosynthesis of the thiazole moiety of thiamine. Catalyzes the conversion of NAD and glycine to adenosine diphosphate 5-(2-hydroxyethyl)-4-methylthiazole-2-carboxylate (ADT), an adenylated thiazole intermediate, using free sulfide as a source of sulfur. This chain is Thiamine thiazole synthase, found in Thermococcus kodakarensis (strain ATCC BAA-918 / JCM 12380 / KOD1) (Pyrococcus kodakaraensis (strain KOD1)).